The following is a 438-amino-acid chain: Transcriptional enhancer factor TEF-3 (438 aa).

Positions 1-18 (MTSEWSSPASPEGSNDSG) are enriched in polar residues. Disordered regions lie at residues 1-36 (MTSE…GVWS) and 195-217 (QPSL…STPA). The segment at residues 28–104 (DNDAEGVWSP…QVLARRKARE (77 aa)) is a DNA-binding region (TEA). A compositionally biased stretch (low complexity) spans 205 to 216 (SPTGLPPSSSTP).

Enriched in cardiac and skeletal muscle.

The protein resides in the nucleus. Its function is as follows. Transcription factor which plays a key role in the Hippo signaling pathway, a pathway involved in organ size control and tumor suppression by restricting proliferation and promoting apoptosis. The core of this pathway is composed of a kinase cascade wherein MST1/MST2, in complex with its regulatory protein SAV1, phosphorylates and activates LATS1/2 in complex with its regulatory protein MOB1, which in turn phosphorylates and inactivates YAP1 oncoprotein and WWTR1/TAZ. Binds m-cat elements from muscle-specific promoters and differentially activate transcription. Isoform B has probably a transactivation capacity that is lacking in the other isoforms. Isoform D may be defective in DNA binding. This chain is Transcriptional enhancer factor TEF-3 (TEAD4), found in Gallus gallus (Chicken).